A 205-amino-acid chain; its full sequence is Pyridoxal 5'-phosphate synthase subunit PdxT (205 aa).

54–56 lines the L-glutamine pocket; that stretch reads GES. Cys-86 functions as the Nucleophile in the catalytic mechanism. Residues Arg-118 and 147–148 contribute to the L-glutamine site; that span reads IR. Residues His-183 and Glu-185 each act as charge relay system in the active site.

This sequence belongs to the glutaminase PdxT/SNO family. In the presence of PdxS, forms a dodecamer of heterodimers. Only shows activity in the heterodimer.

It carries out the reaction aldehydo-D-ribose 5-phosphate + D-glyceraldehyde 3-phosphate + L-glutamine = pyridoxal 5'-phosphate + L-glutamate + phosphate + 3 H2O + H(+). The enzyme catalyses L-glutamine + H2O = L-glutamate + NH4(+). It functions in the pathway cofactor biosynthesis; pyridoxal 5'-phosphate biosynthesis. Functionally, catalyzes the hydrolysis of glutamine to glutamate and ammonia as part of the biosynthesis of pyridoxal 5'-phosphate. The resulting ammonia molecule is channeled to the active site of PdxS. The chain is Pyridoxal 5'-phosphate synthase subunit PdxT from Nitrosopumilus maritimus (strain SCM1).